Consider the following 316-residue polypeptide: Ribosomal RNA small subunit methyltransferase H (316 aa).

S-adenosyl-L-methionine-binding positions include 36–38 (GGH), Asp-56, Phe-83, Asp-104, and Gln-111.

This sequence belongs to the methyltransferase superfamily. RsmH family.

The protein resides in the cytoplasm. It carries out the reaction cytidine(1402) in 16S rRNA + S-adenosyl-L-methionine = N(4)-methylcytidine(1402) in 16S rRNA + S-adenosyl-L-homocysteine + H(+). Its function is as follows. Specifically methylates the N4 position of cytidine in position 1402 (C1402) of 16S rRNA. In Protochlamydia amoebophila (strain UWE25), this protein is Ribosomal RNA small subunit methyltransferase H.